The primary structure comprises 411 residues: Na(+)-translocating NADH-quinone reductase subunit B (411 aa).

3 helical membrane-spanning segments follow: residues 56–76 (IMIT…YNAG), 121–141 (FLPI…LFAV), and 161–181 (ILPA…GVVI). Threonine 228 bears the FMN phosphoryl threonine mark. 5 helical membrane passes run 254-274 (FIPG…AAVL), 284-304 (IMLG…AIGS), 309-329 (MFGM…GMVF), 345-365 (LLFG…NPAF), and 368-388 (GIML…HFFV).

Belongs to the NqrB/RnfD family. As to quaternary structure, composed of six subunits; NqrA, NqrB, NqrC, NqrD, NqrE and NqrF. FMN serves as cofactor.

It localises to the cell inner membrane. It carries out the reaction a ubiquinone + n Na(+)(in) + NADH + H(+) = a ubiquinol + n Na(+)(out) + NAD(+). In terms of biological role, NQR complex catalyzes the reduction of ubiquinone-1 to ubiquinol by two successive reactions, coupled with the transport of Na(+) ions from the cytoplasm to the periplasm. NqrA to NqrE are probably involved in the second step, the conversion of ubisemiquinone to ubiquinol. The chain is Na(+)-translocating NADH-quinone reductase subunit B from Chromohalobacter salexigens (strain ATCC BAA-138 / DSM 3043 / CIP 106854 / NCIMB 13768 / 1H11).